Consider the following 819-residue polypeptide: MKYDFKNVEKFYQNKWDFSVSKDSKKKKCYVLEMFPYPSGKIHMGHLRNYAIGDVIARYKRARGFEVLHPIGWDAFGLPAENAARDNNINPAAWTQDNIDNMRTQLKSIGLSYNWDRELSTCEPDYYKHEQKFFLDFLKHGLAYRKESWVNWDPVDQTVLANEQVVDGKGWRSGAVVEKRKLFQWFLKITDFAEDLLHCLQSLKNWPEKVKTMQERWIGKSEGATIDFEIFGLNKKLKIFTTSPHTLFGASFLAVGAEHPIVQDLKDKEIRDFIGNMKAKGENDEKIGIYTGLNVKHPFLDKELPLYIANFVLMEYGEGAIFGCPAHDQRDFEFAQKYGLPIIPVVCEESTEILKEPYFGDGVMFNSEFLNGLMINEAKKVIIKKLEEKGIGKKTINYRLHDWGISRQRYWGCPIPIIHCKDCGIVPVPEKDLPVVLPTDVEFTSGGNPLDKHPTWKFVDCPKCGKQAERETDTFDTFFESSWYFAAFCSENKSINKDTCNRFMPVDYYIGGIEHAILHLLYSRFFCRALTKCGYFDVKEPFSTLITQGMVCHITYKDENGKWLFPEEAKELIAKGAKIQVGKVEKMSKSKKNTVDPNFIIEKYGADTARLFVLSDTPPEKDMEWSDDGVEGCFRYINKLWRMVVQLRTVNIHYDNENIVGKLLEYRKKIHKLLHGLTDDLENCRLNCVVAKFREMTNLIAEIDVKTGKSLIDEGICILIRVIEPLMPHLAENLWQEIGGEGMLYMQPWPKADESLLIDNMVTVAVQINGKLRATIKVETDLPQEELKKIATDSVSNKIDQSKIRTIYAVPNKVVNIVI.

The 'HIGH' region motif lies at 36–46; it reads PYPSGKIHMGH. Positions 586-590 match the 'KMSKS' region motif; that stretch reads KMSKS. Residue K589 coordinates ATP.

Belongs to the class-I aminoacyl-tRNA synthetase family.

Its subcellular location is the cytoplasm. It catalyses the reaction tRNA(Leu) + L-leucine + ATP = L-leucyl-tRNA(Leu) + AMP + diphosphate. This chain is Leucine--tRNA ligase, found in Wolbachia pipientis subsp. Culex pipiens (strain wPip).